Consider the following 354-residue polypeptide: NADH-quinone oxidoreductase subunit H (354 aa).

A run of 8 helical transmembrane segments spans residues 22–42, 91–111, 124–144, 168–188, 203–223, 255–275, 291–311, and 326–346; these read ILIRAVIIVVPLLLCVAYLIL, YLIAPLMVLMPAVAVWAVIPF, LLYVMAISSVGVYGVILAGWA, MGFALVTVLMVAGSLNLSAIV, ILSWNWLPLLPMFGVYFISGV, LFFLAEYINMIIISTMTALMF, IPGFFWLVIKVFLLLSVFIWI, and LGWKVFIPLTVAWLIIVAIWI.

Belongs to the complex I subunit 1 family. NDH-1 is composed of 14 different subunits. Subunits NuoA, H, J, K, L, M, N constitute the membrane sector of the complex.

The protein localises to the cell inner membrane. It carries out the reaction a quinone + NADH + 5 H(+)(in) = a quinol + NAD(+) + 4 H(+)(out). NDH-1 shuttles electrons from NADH, via FMN and iron-sulfur (Fe-S) centers, to quinones in the respiratory chain. The immediate electron acceptor for the enzyme in this species is believed to be ubiquinone. Couples the redox reaction to proton translocation (for every two electrons transferred, four hydrogen ions are translocated across the cytoplasmic membrane), and thus conserves the redox energy in a proton gradient. This subunit may bind ubiquinone. This chain is NADH-quinone oxidoreductase subunit H, found in Cupriavidus necator (strain ATCC 17699 / DSM 428 / KCTC 22496 / NCIMB 10442 / H16 / Stanier 337) (Ralstonia eutropha).